Here is a 442-residue protein sequence, read N- to C-terminus: tRNA-2-methylthio-N(6)-dimethylallyladenosine synthase (442 aa).

Residues Gln-2 to Arg-117 form the MTTase N-terminal domain. Residues Cys-11, Cys-47, Cys-80, Cys-157, Cys-161, and Cys-164 each contribute to the [4Fe-4S] cluster site. Residues Lys-143–Ala-374 form the Radical SAM core domain. Residues Arg-377–Asn-442 enclose the TRAM domain.

Belongs to the methylthiotransferase family. MiaB subfamily. Monomer. Requires [4Fe-4S] cluster as cofactor.

The protein localises to the cytoplasm. The enzyme catalyses N(6)-dimethylallyladenosine(37) in tRNA + (sulfur carrier)-SH + AH2 + 2 S-adenosyl-L-methionine = 2-methylsulfanyl-N(6)-dimethylallyladenosine(37) in tRNA + (sulfur carrier)-H + 5'-deoxyadenosine + L-methionine + A + S-adenosyl-L-homocysteine + 2 H(+). In terms of biological role, catalyzes the methylthiolation of N6-(dimethylallyl)adenosine (i(6)A), leading to the formation of 2-methylthio-N6-(dimethylallyl)adenosine (ms(2)i(6)A) at position 37 in tRNAs that read codons beginning with uridine. The sequence is that of tRNA-2-methylthio-N(6)-dimethylallyladenosine synthase from Ehrlichia chaffeensis (strain ATCC CRL-10679 / Arkansas).